The following is a 338-amino-acid chain: Homeobox protein ceh-20 (338 aa).

The 184-residue stretch at 4-187 (THPANLSELL…VMILRSRFLD (184 aa)) folds into the PBC domain. The segment at 11–91 (ELLDAVLKIN…EGVAGPDKGG (81 aa)) is PBC-A. A PBC-B region spans residues 94–187 (GSDASGGDQA…VMILRSRFLD (94 aa)). The segment at residues 188–250 (ARRKRRNFSK…NKRIRYKKNM (63 aa)) is a DNA-binding region (homeobox; TALE-type).

Belongs to the TALE/PBX homeobox family. As to quaternary structure, interacts with Meis protein psa-3. Interacts with homeobox protein nob-1. In terms of tissue distribution, expressed in head dopaminergic neurons.

The protein resides in the nucleus. Its function is as follows. Transcription factor that binds to the 5'-TGATNNAT(G/T)(G/A)-3' PBC/Hox lineage enhancer region of sem-2 to promote cell fate specification in the postembryonic mesoderm (also known as the M lineage). Required for the M lineage-specific expression of the transcription factor, mls-2. Required for asymmetric division of the T hypodermal cell, probably acting via the regulation of asymmetric expression of Meis protein psa-3 in concert with homeobox protein nob-1 and the Wnt-MAPK pathway. Has a role in the mig-13 pathway to promote the guidance, migration and positioning of Q neuroblasts and their descendants along the anteroposterior body axis and the anterior migration of BDU interneurons. Also required for normal vulval formation. Plays a role in regulating gene expression in dopaminergic neurons, acting in midbody PDE neurons, and acting redundantly with ceh-40 in head neurons. May activate dopamine pathway genes in concert with ETS domain-containing protein ast-1, and homeobox proteins ceh-43 and ceh-40. The sequence is that of Homeobox protein ceh-20 from Caenorhabditis elegans.